The sequence spans 652 residues: Sodium-dependent phosphate transporter 1-A (652 aa).

Residues 1–25 are Cytoplasmic-facing; the sequence is MESTTLASLAAVSVLAAGAQTDMSD. The chain crosses the membrane as a helical span at residues 26 to 46; sequence VLWLLILGFVIAFILAFSVGA. Residues 47 to 66 are Extracellular-facing; sequence NDVANSFGTAVGSGVVTLRQ. Residues 67-87 traverse the membrane as a helical segment; it reads ACILATIFETVGAMLLGAKVS. At 88-104 the chain is on the cytoplasmic side; the sequence is ETIRSGIIDVHMYNGSE. Residues 105–125 form a helical membrane-spanning segment; that stretch reads AVLMAGSISAMFGSAVWQLAA. The Extracellular segment spans residues 126–162; it reads SFLKLPISGTHCIVGATIGFSMVARGHQGVKWLELLR. The chain crosses the membrane as a helical span at residues 163-183; sequence IVASWFLSPLLSGIMSAVLFY. At 184 to 201 the chain is on the cytoplasmic side; that stretch reads FVRKFILNKDDPVPNGLR. A helical transmembrane segment spans residues 202 to 222; sequence ALPVFYAVTMGINLFSIMFTG. Over 223-234 the chain is Extracellular; sequence APMLGFDRIPWW. Residues 235–255 traverse the membrane as a helical segment; sequence GTLLISLGCAILTALVVWFIV. Over 256–482 the chain is Cytoplasmic; that stretch reads CPRLKKKMQS…IDELEIDKPE (227 aa). Residues 278–308 are disordered; that stretch reads TQLVEKKPSSNGLMDHHPGPPRNYSPVPQTP. A compositionally biased stretch (basic and acidic residues) spans 281 to 295; that stretch reads VEKKPSSNGLMDHHP. Residues 297 to 308 are compositionally biased toward pro residues; that stretch reads PPRNYSPVPQTP. Residues 483–503 traverse the membrane as a helical segment; that stretch reads VSTLFQFLQILTACFGSFAHG. The Extracellular portion of the chain corresponds to 504 to 531; it reads GNDVSNAIGPLVALWLIYDSASVAPSAP. The helical transmembrane segment at 532–552 threads the bilayer; that stretch reads TPIWLLLYGGVGICTGLWIWG. Topologically, residues 553 to 571 are cytoplasmic; sequence RRVIQTMGKDLTPITPSSG. A helical transmembrane segment spans residues 572–592; it reads FSIELASAITVVVASNIGLPV. Residues 593–621 are Extracellular-facing; that stretch reads STTHCKVGSVVSVGWLRSRKAVDWHLFRN. The helical transmembrane segment at 622–642 threads the bilayer; sequence IFIAWFVTVPISGLISAAIMA. The Cytoplasmic segment spans residues 643-652; the sequence is LFYYVILPLT.

Belongs to the inorganic phosphate transporter (PiT) (TC 2.A.20) family.

The protein localises to the membrane. Functionally, sodium-phosphate symporter which plays a fundamental housekeeping role in phosphate transport. The chain is Sodium-dependent phosphate transporter 1-A (slc20a1a) from Danio rerio (Zebrafish).